The following is a 188-amino-acid chain: VQ motif-containing protein 18 (188 aa).

3 disordered regions span residues 1 to 20 (MEITQYQSFHEGSSSRVSMN), 58 to 92 (LTGKPAPGEAKTGKKRAKSRITTPQEPVCDDHQPV), and 157 to 188 (GFIFNNNNNNNNNNNNNNNNNTNFDTKAHNSS). A VQ motif is present at residues 51–60 (FRSLVQSLTG). The segment covering 161–179 (NNNNNNNNNNNNNNNNNTN) has biased composition (low complexity).

Its subcellular location is the nucleus. Its function is as follows. May function as positive regulator of plant growth. This is VQ motif-containing protein 18 from Arabidopsis thaliana (Mouse-ear cress).